The primary structure comprises 308 residues: Porphobilinogen deaminase (308 aa).

S-(dipyrrolylmethanemethyl)cysteine is present on Cys-241.

The protein belongs to the HMBS family. Monomer. Requires dipyrromethane as cofactor.

It catalyses the reaction 4 porphobilinogen + H2O = hydroxymethylbilane + 4 NH4(+). It participates in porphyrin-containing compound metabolism; protoporphyrin-IX biosynthesis; coproporphyrinogen-III from 5-aminolevulinate: step 2/4. Functionally, tetrapolymerization of the monopyrrole PBG into the hydroxymethylbilane pre-uroporphyrinogen in several discrete steps. The chain is Porphobilinogen deaminase from Staphylococcus saprophyticus subsp. saprophyticus (strain ATCC 15305 / DSM 20229 / NCIMB 8711 / NCTC 7292 / S-41).